The chain runs to 86 residues: U2-sicaritoxin-Li1b (86 aa).

A signal peptide spans Met-1 to Ala-20. Residues Glu-21 to Arg-33 constitute a propeptide that is removed on maturation. 4 cysteine pairs are disulfide-bonded: Cys-35-Cys-53, Cys-42-Cys-62, Cys-52-Cys-71, and Cys-64-Cys-69. Position 85 is a lysine amide (Lys-85).

The protein belongs to the neurotoxin 39 family. As to expression, expressed by the venom gland.

The protein localises to the secreted. Toxin active against S.frugiperda larvae. May act on sodium channels (Nav). The chain is U2-sicaritoxin-Li1b from Loxosceles intermedia (Brown spider).